A 365-amino-acid chain; its full sequence is Outer membrane porin protein LC (365 aa).

The first 23 residues, 1-23, serve as a signal peptide directing secretion; the sequence is MKKLTVAISAVAASVLMAMSAQA.

Belongs to the Gram-negative porin family. Homotrimer.

The protein localises to the host cell outer membrane. Its function is as follows. Forms pores that allow passive diffusion of small molecules across the host cell outer membrane. This Enterobacteria phage PA-2 (Bacteriophage PA-2) protein is Outer membrane porin protein LC (LC).